The sequence spans 131 residues: MPLYEHVLIARQDLSNAQAEGLIEHFSTVIADNGGKVVDNEYWGVRTLAYKINKNRKGHYAYLRSDAPSAAVQEMERLARLHDDVMRVLTVRVDEHKDGPSVQMQKRDERERGDRGDRGERRERRDRDDRN.

The interval 92–131 is disordered; it reads RVDEHKDGPSVQMQKRDERERGDRGDRGERRERRDRDDRN.

Belongs to the bacterial ribosomal protein bS6 family.

Functionally, binds together with bS18 to 16S ribosomal RNA. This Paracoccus denitrificans (strain Pd 1222) protein is Small ribosomal subunit protein bS6.